The chain runs to 533 residues: Bifunctional purine biosynthesis protein PurH (533 aa).

The MGS-like domain maps to 1 to 148 (MQPNRPIRQA…KNHQDVAIVV (148 aa)).

The protein belongs to the PurH family.

The enzyme catalyses (6R)-10-formyltetrahydrofolate + 5-amino-1-(5-phospho-beta-D-ribosyl)imidazole-4-carboxamide = 5-formamido-1-(5-phospho-D-ribosyl)imidazole-4-carboxamide + (6S)-5,6,7,8-tetrahydrofolate. It catalyses the reaction IMP + H2O = 5-formamido-1-(5-phospho-D-ribosyl)imidazole-4-carboxamide. It functions in the pathway purine metabolism; IMP biosynthesis via de novo pathway; 5-formamido-1-(5-phospho-D-ribosyl)imidazole-4-carboxamide from 5-amino-1-(5-phospho-D-ribosyl)imidazole-4-carboxamide (10-formyl THF route): step 1/1. It participates in purine metabolism; IMP biosynthesis via de novo pathway; IMP from 5-formamido-1-(5-phospho-D-ribosyl)imidazole-4-carboxamide: step 1/1. The sequence is that of Bifunctional purine biosynthesis protein PurH from Pasteurella multocida (strain Pm70).